We begin with the raw amino-acid sequence, 272 residues long: Tropinone reductase-like 1 (272 aa).

17 to 41 (IITGGASGIGACTAELFHENGAKVV) lines the NAD(+) pocket. Serine 150 contacts substrate. Residue tyrosine 163 is the Proton acceptor of the active site.

The protein belongs to the short-chain dehydrogenases/reductases (SDR) family.

Its function is as follows. Has no tropinone reductase activity. This Erythroxylum coca (Coca plant) protein is Tropinone reductase-like 1.